We begin with the raw amino-acid sequence, 145 residues long: Hemoglobin fetal subunit beta (145 aa).

The Globin domain occupies 1–145 (MLSAEEKASV…VANALAHRYH (145 aa)). Heme b contacts are provided by His62 and His91.

This sequence belongs to the globin family. In terms of assembly, heterotetramer of two alpha chains and two beta chains. Red blood cells.

Involved in oxygen transport from the lung to the various peripheral tissues. The polypeptide is Hemoglobin fetal subunit beta (Capra hircus (Goat)).